Consider the following 208-residue polypeptide: Large ribosomal subunit protein uL4 (208 aa).

Residues 45–96 (RQGTHKSKTRAEVRGGGRKPYRQKGTGNARQGSTRSPLMVGGGTIFGPTPHG) form a disordered region. Residues 69–80 (GTGNARQGSTRS) show a composition bias toward polar residues.

This sequence belongs to the universal ribosomal protein uL4 family. As to quaternary structure, part of the 50S ribosomal subunit.

One of the primary rRNA binding proteins, this protein initially binds near the 5'-end of the 23S rRNA. It is important during the early stages of 50S assembly. It makes multiple contacts with different domains of the 23S rRNA in the assembled 50S subunit and ribosome. In terms of biological role, forms part of the polypeptide exit tunnel. This is Large ribosomal subunit protein uL4 from Chlorobium phaeovibrioides (strain DSM 265 / 1930) (Prosthecochloris vibrioformis (strain DSM 265)).